The following is a 214-amino-acid chain: Coiled-coil domain-containing protein 169 (214 aa).

A coiled-coil region spans residues 30 to 144; sequence EMLQMSTFEL…IEQEAKAYYK (115 aa). The disordered stretch occupies residues 161 to 214; the sequence is VTQEAAKKQQSDPAHATREKPAFKAKYNGLAKRRTMTKRRGGMTKGSHPSNMKH. The segment covering 165–182 has biased composition (basic and acidic residues); that stretch reads AAKKQQSDPAHATREKPA. Basic residues predominate over residues 191 to 202; the sequence is AKRRTMTKRRGG.

The protein belongs to the CCDC169 family.

This chain is Coiled-coil domain-containing protein 169 (ccdc169), found in Xenopus laevis (African clawed frog).